The sequence spans 369 residues: Chaperone protein DnaJ (369 aa).

Positions 5–69 (DYYDVLGISK…NKKAQYDRFG (65 aa)) constitute a J domain. The segment at 131–213 (GTTKNVSVDI…CSGAGRVKAK (83 aa)) adopts a CR-type zinc-finger fold. Residues Cys144, Cys147, Cys161, Cys164, Cys187, Cys190, Cys201, and Cys204 each contribute to the Zn(2+) site. 4 CXXCXGXG motif repeats span residues 144 to 151 (CGHCHGSG), 161 to 168 (CSKCHGQG), 187 to 194 (CPQCQGEG), and 201 to 208 (CHVCSGAG).

This sequence belongs to the DnaJ family. In terms of assembly, homodimer. Requires Zn(2+) as cofactor.

It is found in the cytoplasm. In terms of biological role, participates actively in the response to hyperosmotic and heat shock by preventing the aggregation of stress-denatured proteins and by disaggregating proteins, also in an autonomous, DnaK-independent fashion. Unfolded proteins bind initially to DnaJ; upon interaction with the DnaJ-bound protein, DnaK hydrolyzes its bound ATP, resulting in the formation of a stable complex. GrpE releases ADP from DnaK; ATP binding to DnaK triggers the release of the substrate protein, thus completing the reaction cycle. Several rounds of ATP-dependent interactions between DnaJ, DnaK and GrpE are required for fully efficient folding. Also involved, together with DnaK and GrpE, in the DNA replication of plasmids through activation of initiation proteins. In Acholeplasma laidlawii, this protein is Chaperone protein DnaJ.